We begin with the raw amino-acid sequence, 136 residues long: Large ribosomal subunit protein uL16 (136 aa).

This sequence belongs to the universal ribosomal protein uL16 family. Part of the 50S ribosomal subunit.

In terms of biological role, binds 23S rRNA and is also seen to make contacts with the A and possibly P site tRNAs. This is Large ribosomal subunit protein uL16 from Shewanella pealeana (strain ATCC 700345 / ANG-SQ1).